We begin with the raw amino-acid sequence, 222 residues long: Glutathione S-transferase U21 (222 aa).

Residues 3 to 83 (AEVILLGFWP…YIDEVWSDNN (81 aa)) enclose the GST N-terminal domain. Residues 13 to 14 (SM), 40 to 41 (NK), 54 to 55 (TI), and 67 to 68 (ES) each bind glutathione. The GST C-terminal domain maps to 89–211 (DPYHRAQALF…LPDSEKVVGY (123 aa)).

It belongs to the GST superfamily. Tau family.

The protein localises to the cytoplasm. It is found in the cytosol. It carries out the reaction RX + glutathione = an S-substituted glutathione + a halide anion + H(+). In terms of biological role, may be involved in the conjugation of reduced glutathione to a wide number of exogenous and endogenous hydrophobic electrophiles and have a detoxification role against certain herbicides. The chain is Glutathione S-transferase U21 (GSTU21) from Arabidopsis thaliana (Mouse-ear cress).